Reading from the N-terminus, the 773-residue chain is Lon protease homolog 2, peroxisomal (773 aa).

The region spanning 9–198 (LPVILVTSGV…MCIKWMNEKK (190 aa)) is the Lon N-terminal domain. 336-343 (GPPGIGKT) serves as a coordination point for ATP. Residues 587–766 (PLPAGVCFGL…EDVIGAMMDK (180 aa)) enclose the Lon proteolytic domain. Active-site residues include Ser-672 and Lys-715. Positions 771 to 773 (AKL) match the Microbody targeting signal motif.

Belongs to the peptidase S16 family.

The protein localises to the peroxisome matrix. It catalyses the reaction Hydrolysis of proteins in presence of ATP.. In terms of biological role, ATP-dependent serine protease that mediates the selective degradation of misfolded and unassembled polypeptides in the peroxisomal matrix. Necessary for type 2 peroxisome targeting signal (PTS2)-containing protein processing and facilitates peroxisome matrix protein import. The protein is Lon protease homolog 2, peroxisomal of Caenorhabditis elegans.